Here is a 230-residue protein sequence, read N- to C-terminus: 5'-methylthioadenosine/S-adenosylhomocysteine nucleosidase (230 aa).

The Proton acceptor role is filled by Glu12. Substrate is bound by residues Gly78, Met153, and 174-175; that span reads ME. The Proton donor role is filled by Asp198.

It belongs to the PNP/UDP phosphorylase family. MtnN subfamily.

The enzyme catalyses S-adenosyl-L-homocysteine + H2O = S-(5-deoxy-D-ribos-5-yl)-L-homocysteine + adenine. The catalysed reaction is S-methyl-5'-thioadenosine + H2O = 5-(methylsulfanyl)-D-ribose + adenine. It catalyses the reaction 5'-deoxyadenosine + H2O = 5-deoxy-D-ribose + adenine. It participates in amino-acid biosynthesis; L-methionine biosynthesis via salvage pathway; S-methyl-5-thio-alpha-D-ribose 1-phosphate from S-methyl-5'-thioadenosine (hydrolase route): step 1/2. Functionally, catalyzes the irreversible cleavage of the glycosidic bond in both 5'-methylthioadenosine (MTA) and S-adenosylhomocysteine (SAH/AdoHcy) to adenine and the corresponding thioribose, 5'-methylthioribose and S-ribosylhomocysteine, respectively. Also cleaves 5'-deoxyadenosine, a toxic by-product of radical S-adenosylmethionine (SAM) enzymes, into 5-deoxyribose and adenine. In Aeromonas salmonicida (strain A449), this protein is 5'-methylthioadenosine/S-adenosylhomocysteine nucleosidase.